Reading from the N-terminus, the 68-residue chain is Large ribosomal subunit protein bL32 (68 aa).

The protein belongs to the bacterial ribosomal protein bL32 family.

The protein is Large ribosomal subunit protein bL32 of Cereibacter sphaeroides (strain ATCC 17025 / ATH 2.4.3) (Rhodobacter sphaeroides).